The primary structure comprises 192 residues: 3-hydroxyanthranilate 3,4-dioxygenase (192 aa).

Arg-50 provides a ligand contact to O2. Fe cation is bound by residues His-54, Glu-60, and His-102. Residue Glu-60 participates in substrate binding. Substrate is bound by residues Arg-106 and Glu-116. Residues Cys-131, Cys-134, Cys-168, and Cys-171 each coordinate a divalent metal cation.

This sequence belongs to the 3-HAO family. Fe(2+) serves as cofactor.

Its subcellular location is the cytoplasm. It catalyses the reaction 3-hydroxyanthranilate + O2 = (2Z,4Z)-2-amino-3-carboxymuconate 6-semialdehyde. Its pathway is cofactor biosynthesis; NAD(+) biosynthesis; quinolinate from L-kynurenine: step 3/3. Catalyzes the oxidative ring opening of 3-hydroxyanthranilate to 2-amino-3-carboxymuconate semialdehyde, which spontaneously cyclizes to quinolinate. The chain is 3-hydroxyanthranilate 3,4-dioxygenase from Coccidioides immitis (strain RS) (Valley fever fungus).